The primary structure comprises 297 residues: Homoserine kinase (297 aa).

82–92 contacts ATP; the sequence is PVSRGLGSSAA.

This sequence belongs to the GHMP kinase family. Homoserine kinase subfamily.

It is found in the cytoplasm. It carries out the reaction L-homoserine + ATP = O-phospho-L-homoserine + ADP + H(+). It participates in amino-acid biosynthesis; L-threonine biosynthesis; L-threonine from L-aspartate: step 4/5. Functionally, catalyzes the ATP-dependent phosphorylation of L-homoserine to L-homoserine phosphate. The polypeptide is Homoserine kinase (Clostridium botulinum (strain ATCC 19397 / Type A)).